Consider the following 173-residue polypeptide: Co-chaperone protein HscB homolog (173 aa).

Residues 5–77 enclose the J domain; sequence CHYALFDLQP…PRRARYLLAI (73 aa).

Belongs to the HscB family. As to quaternary structure, interacts with HscA and stimulates its ATPase activity.

In terms of biological role, co-chaperone involved in the maturation of iron-sulfur cluster-containing proteins. Seems to help targeting proteins to be folded toward HscA. The polypeptide is Co-chaperone protein HscB homolog (Pseudomonas entomophila (strain L48)).